The chain runs to 1882 residues: uncharacterized protein (1882 aa).

Residues 16-36 form a helical membrane-spanning segment; the sequence is FFLLFGIIFVLFSIIFLETSI. Disordered stretches follow at residues 103–129, 220–306, 492–513, and 658–698; these read DFGS…DVND, FPGD…ESET, VALA…VKDP, and QTDE…TKST. The segment covering 221-239 has biased composition (basic and acidic residues); that stretch reads PGDKGKGEDKKTTKKKSEI. The span at 240-249 shows a compositional bias: polar residues; that stretch reads KQASSATTVL. Basic and acidic residues-rich tracts occupy residues 259-275, 284-294, and 500-511; these read TDAK…KDSN, NKDKVWFKSDE, and DKQESSADDGVK. The segment covering 667–698 has biased composition (low complexity); that stretch reads AKTTQGTTDSLTQLADASSSSSSSSTGDTKST. The next 4 membrane-spanning stretches (helical) occupy residues 987–1007, 1037–1057, 1080–1100, and 1154–1174; these read ASVV…ILLI, VFAG…AFLL, WISF…ISWI, and LFTY…AGTI. Disordered regions lie at residues 1233 to 1253 and 1572 to 1598; these read DQIQ…EHPY and KDGQ…TSST. Over residues 1234 to 1245 the composition is skewed to low complexity; it reads QIQQQQQQQQQQ. The span at 1583-1594 shows a compositional bias: gly residues; it reads TSSGGGSCGGGS. 4 helical membrane passes run 1759 to 1779, 1807 to 1827, 1828 to 1848, and 1851 to 1871; these read FLLG…GISM, FFIP…AGLL, VGVQ…VFEF, and YMVG…YFWI.

Belongs to the ABC-4 integral membrane protein family.

The protein localises to the cell membrane. This is an uncharacterized protein from Mycoplasma pneumoniae (strain ATCC 29342 / M129 / Subtype 1) (Mycoplasmoides pneumoniae).